The following is a 111-amino-acid chain: Cytochrome c6-like (111 aa).

The first 25 residues, 1-25 (MQKFLKLVLVTFLFLISTLTPPANA), serve as a signal peptide directing secretion. Heme c is bound by residues cysteine 39, cysteine 42, histidine 43, and methionine 83.

It belongs to the cytochrome c family. PetJ subfamily. Post-translationally, binds 1 heme c group covalently per subunit.

It is found in the cellular thylakoid lumen. This chain is Cytochrome c6-like, found in Nostoc sp. (strain PCC 7120 / SAG 25.82 / UTEX 2576).